We begin with the raw amino-acid sequence, 84 residues long: uncharacterized protein (84 aa).

The interval 1–21 (MYYRRQGEPQEMYGNGNNSVS) is disordered. Residues 49-69 (YIIYAIVAAILLLLFWLLYKK) traverse the membrane as a helical segment.

The protein resides in the membrane. This is an uncharacterized protein from Invertebrate iridescent virus 6 (IIV-6).